The chain runs to 306 residues: Protein YIPF1 (306 aa).

Over 1 to 119 the chain is Cytoplasmic; sequence MAAVDDLQFE…VRLYIRSNPD (119 aa). Positions 14–62 are disordered; it reads NAATSLTANPDATTVNIEDPGETPKHQSGSPRGSGREEDDELLGNDDSD. The span at 15–29 shows a compositional bias: polar residues; sequence AATSLTANPDATTVN. Residues 50 to 59 are compositionally biased toward acidic residues; the sequence is EEDDELLGND. Residues 120-140 traverse the membrane as a helical segment; the sequence is LYGPFWICATLVFAIAISGNL. The Lumenal portion of the chain corresponds to 141 to 162; the sequence is SNFLIHLGEKTYRYVPEFRKVS. Residues 163-183 form a helical membrane-spanning segment; it reads IAATTIYAYAWLVPLALWGFL. The Cytoplasmic segment spans residues 184 to 200; the sequence is MWRNSKVMNIVSYSFLE. The helical transmembrane segment at 201-221 threads the bilayer; it reads IVCVYGYSLFIYIPTAILWII. The Lumenal segment spans residues 222–227; the sequence is PQKAVR. A helical membrane pass occupies residues 228 to 248; sequence WILVMIALGISGSVLAMTFWP. Over 249–256 the chain is Cytoplasmic; it reads AVREDNRR. Residues 257-277 form a helical membrane-spanning segment; it reads VALATIVTIVLLHMLLSVGCL. The Lumenal portion of the chain corresponds to 278–306; that stretch reads AYFFDAPEMDHLPTTTATPNQTVAAAKSS. A glycan (N-linked (GlcNAc...) asparagine) is linked at Asn297.

This sequence belongs to the YIP1 family. In terms of assembly, interacts with YIPF6; this interaction may stabilize YIPF1. May also form a ternary complex with YIPF2 and YIPF6.

The protein resides in the golgi apparatus. It is found in the cis-Golgi network membrane. The protein localises to the trans-Golgi network membrane. Its subcellular location is the late endosome membrane. The protein is Protein YIPF1 (YIPF1) of Pongo abelii (Sumatran orangutan).